The following is a 553-amino-acid chain: Hyaluronan synthase 3 (553 aa).

The Cytoplasmic portion of the chain corresponds to 1-15 (MPVQLTTALRVVGTS). A helical membrane pass occupies residues 16 to 36 (LFALAVLGGILAAYVTGYQFI). The Extracellular portion of the chain corresponds to 37–44 (HTEKHYLS). Residues 45–65 (FGLYGAILGLHLLIQSLFAFL) traverse the membrane as a helical segment. Topologically, residues 66–377 (EHRRMRRAGQ…NSLWFHKHHL (312 aa)) are cytoplasmic. A helical transmembrane segment spans residues 378 to 398 (WMTYESVVTGFFPFFLIATVI). Residues 399–408 (QLFYRGRIWN) lie on the Extracellular side of the membrane. Residues 409–429 (ILLFLLTVQLVGIIKATYACF) traverse the membrane as a helical segment. Residues 430–440 (LRGNAEMIFMS) lie on the Cytoplasmic side of the membrane. Residues 441–461 (LYSLLYMSSLLPAKIFAIATI) form a helical membrane-spanning segment. Asn462 is a glycosylation site (N-linked (GlcNAc...) asparagine). At 462–473 (NKSGWGTSGRKT) the chain is on the extracellular side. The helical transmembrane segment at 474–494 (IVVNFIGLIPVSIWVAVLLGG) threads the bilayer. The Cytoplasmic segment spans residues 495-515 (LAYTAYCQDLFSETELAFLVS). A helical membrane pass occupies residues 516–536 (GAILYGCYWVALLMLYLAIIA). Residues 537–553 (RRCGKKPEQYSLAFAEV) are Extracellular-facing.

The protein belongs to the NodC/HAS family. In terms of assembly, homodimers. Forms heterodimers with HAS2 and HAS1. It depends on Mg(2+) as a cofactor. In terms of processing, O-GlcNAcylation increases the hyaluronan synthase activity, HAS3 stability and its plasma membrane residence. The concentration of UDP-GlcNAc controls the level of O-GlcNAc modification.

Its subcellular location is the cell membrane. It localises to the golgi apparatus membrane. It is found in the golgi apparatus. The protein resides in the trans-Golgi network membrane. The protein localises to the early endosome. The enzyme catalyses [hyaluronan](n) + UDP-N-acetyl-alpha-D-glucosamine = N-acetyl-beta-D-glucosaminyl-(1-&gt;4)-[hyaluronan](n) + UDP + H(+). The catalysed reaction is N-acetyl-beta-D-glucosaminyl-(1-&gt;4)-[hyaluronan](n) + UDP-alpha-D-glucuronate = [hyaluronan](n+1) + UDP + H(+). The protein operates within glycan biosynthesis; hyaluronan biosynthesis. The enzymatic activity depends on the availability of cytosolic levels of UDP-GlcUA and UDP-GlcNAc. Catalyzes the addition of GlcNAc or GlcUA monosaccharides to the nascent hyaluronan polymer. Therefore, it is essential to hyaluronan synthesis a major component of most extracellular matrices that has a structural role in tissues architectures and regulates cell adhesion, migration and differentiation. This is one of three isoenzymes responsible for cellular hyaluronan synthesis. This chain is Hyaluronan synthase 3, found in Homo sapiens (Human).